The chain runs to 473 residues: Photosystem II CP43 reaction center protein (473 aa).

Residues 1 to 14 (MKTLYSLRRFYHVE) constitute a propeptide that is removed on maturation. Thr-15 is subject to N-acetylthreonine. A Phosphothreonine modification is found at Thr-15. 5 helical membrane passes run 69-93 (LFEV…PHLA), 134-155 (LLGP…KDRN), 178-200 (KALY…RKIT), 255-275 (KPFA…LSYS), and 291-312 (WFNN…ASQA). Residue Glu-367 participates in [CaMn4O5] cluster binding. The helical transmembrane segment at 447–471 (RARAAAAGFEKGIDRDFEPVLSMTP) threads the bilayer.

This sequence belongs to the PsbB/PsbC family. PsbC subfamily. As to quaternary structure, PSII is composed of 1 copy each of membrane proteins PsbA, PsbB, PsbC, PsbD, PsbE, PsbF, PsbH, PsbI, PsbJ, PsbK, PsbL, PsbM, PsbT, PsbX, PsbY, PsbZ, Psb30/Ycf12, at least 3 peripheral proteins of the oxygen-evolving complex and a large number of cofactors. It forms dimeric complexes. Binds multiple chlorophylls and provides some of the ligands for the Ca-4Mn-5O cluster of the oxygen-evolving complex. It may also provide a ligand for a Cl- that is required for oxygen evolution. PSII binds additional chlorophylls, carotenoids and specific lipids. is required as a cofactor.

It is found in the plastid. It localises to the chloroplast thylakoid membrane. One of the components of the core complex of photosystem II (PSII). It binds chlorophyll and helps catalyze the primary light-induced photochemical processes of PSII. PSII is a light-driven water:plastoquinone oxidoreductase, using light energy to abstract electrons from H(2)O, generating O(2) and a proton gradient subsequently used for ATP formation. In Coffea arabica (Arabian coffee), this protein is Photosystem II CP43 reaction center protein.